We begin with the raw amino-acid sequence, 455 residues long: Bifunctional protein GlmU (455 aa).

A pyrophosphorylase region spans residues 1–226 (MSLDIVILAA…AMEVQGANDR (226 aa)). Residues 8-11 (LAAG), Lys-22, Gln-73, 78-79 (GT), 99-101 (YGD), Gly-136, Glu-151, Asn-166, and Asn-224 each bind UDP-N-acetyl-alpha-D-glucosamine. Asp-101 contributes to the Mg(2+) binding site. Mg(2+) is bound at residue Asn-224. Residues 227–247 (KQLSELERHYQMREARRLMAA) are linker. The tract at residues 248-455 (GVTLRDPARF…WKRPVKISKD (208 aa)) is N-acetyltransferase. 2 residues coordinate UDP-N-acetyl-alpha-D-glucosamine: Arg-330 and Lys-348. His-360 acts as the Proton acceptor in catalysis. UDP-N-acetyl-alpha-D-glucosamine is bound by residues Tyr-363 and Asn-374. Acetyl-CoA contacts are provided by residues Ala-377, 383-384 (NY), Ser-402, Ala-420, and Arg-437.

It in the N-terminal section; belongs to the N-acetylglucosamine-1-phosphate uridyltransferase family. The protein in the C-terminal section; belongs to the transferase hexapeptide repeat family. In terms of assembly, homotrimer. It depends on Mg(2+) as a cofactor.

The protein localises to the cytoplasm. The catalysed reaction is alpha-D-glucosamine 1-phosphate + acetyl-CoA = N-acetyl-alpha-D-glucosamine 1-phosphate + CoA + H(+). It catalyses the reaction N-acetyl-alpha-D-glucosamine 1-phosphate + UTP + H(+) = UDP-N-acetyl-alpha-D-glucosamine + diphosphate. The protein operates within nucleotide-sugar biosynthesis; UDP-N-acetyl-alpha-D-glucosamine biosynthesis; N-acetyl-alpha-D-glucosamine 1-phosphate from alpha-D-glucosamine 6-phosphate (route II): step 2/2. It functions in the pathway nucleotide-sugar biosynthesis; UDP-N-acetyl-alpha-D-glucosamine biosynthesis; UDP-N-acetyl-alpha-D-glucosamine from N-acetyl-alpha-D-glucosamine 1-phosphate: step 1/1. Its pathway is bacterial outer membrane biogenesis; LPS lipid A biosynthesis. Catalyzes the last two sequential reactions in the de novo biosynthetic pathway for UDP-N-acetylglucosamine (UDP-GlcNAc). The C-terminal domain catalyzes the transfer of acetyl group from acetyl coenzyme A to glucosamine-1-phosphate (GlcN-1-P) to produce N-acetylglucosamine-1-phosphate (GlcNAc-1-P), which is converted into UDP-GlcNAc by the transfer of uridine 5-monophosphate (from uridine 5-triphosphate), a reaction catalyzed by the N-terminal domain. This chain is Bifunctional protein GlmU, found in Pseudomonas syringae pv. syringae (strain B728a).